Reading from the N-terminus, the 475-residue chain is D(1B) dopamine receptor (475 aa).

At 1–38 (MLPPGRNRTAQPARLGLQRQLAQVDAPAGSATPLGPAQ) the chain is on the extracellular side. N-linked (GlcNAc...) asparagine glycosylation occurs at Asn-7. Residues 39–64 (VVTAGLLTLLIVWTLLGNVLVCAAIV) form a helical membrane-spanning segment. Residues 65–75 (RSRHLRAKMTN) lie on the Cytoplasmic side of the membrane. Residues 76–102 (IFIVSLAVSDLFVALLVMPWKAVAEVA) form a helical membrane-spanning segment. Over 103–111 (GYWPFGTFC) the chain is Extracellular. Cys-111 and Cys-211 are joined by a disulfide. A helical membrane pass occupies residues 112–134 (DIWVAFDIMCSTASILNLCIISV). Topologically, residues 135–153 (DRYWAISRPFRYERKMTQR) are cytoplasmic. The helical transmembrane segment at 154–179 (VALVMVGLAWTLSILISFIPVQLNWH) threads the bilayer. Over 180 to 215 (RDKAGSQGQEGLLSNGTPWEEGWELEGRTENCDSSL) the chain is Extracellular. Residues 216–240 (NRTYAISSSLISFYIPVAIMIVTYT) traverse the membrane as a helical segment. Over 241–289 (RIYRIAQVQIRRISSLERAAEHAQSCRSRGAYEPDPSLRASIKKETKVF) the chain is Cytoplasmic. A helical transmembrane segment spans residues 290 to 317 (KTLSMIMGVFVCCWLPFFILNCMVPFCS). Residues 318–335 (SGDAEGPKTGFPCVSETT) are Extracellular-facing. The chain crosses the membrane as a helical span at residues 336 to 357 (FDIFVWFGWANSSLNPIIYAFN). Residues 358 to 475 (ADFRKVFAQL…LTPNCFDKTA (118 aa)) are Cytoplasmic-facing. Cys-370 is lipidated: S-palmitoyl cysteine. The segment at 415 to 443 (SGDREVGEEEEEGPFDHMSQISPTTPDGD) is disordered.

It belongs to the G-protein coupled receptor 1 family. Brain, in the lateral mammillary nuclei, the anterior pretectal nuclei, and several layers of the hippocampus.

The protein localises to the cell membrane. In terms of biological role, dopamine receptor whose activity is mediated by G proteins which activate adenylyl cyclase. This is D(1B) dopamine receptor (Drd5) from Rattus norvegicus (Rat).